A 144-amino-acid chain; its full sequence is Ribosomally synthesized cyclic peptide phomopsin precursor phomA' (144 aa).

Residues Met-1 to Ala-18 form the signal peptide. 9 consecutive propeptides follow at residues Ala-19–Asp-35, Lys-42–Asp-50, Lys-57–Asp-65, Lys-72–Asp-79, Lys-86–Asp-94, Lys-101–Asp-108, Lys-115–Asp-123, Lys-130–Asp-137, and Lys-144.

Post-translationally, phomA' is processed by several endopeptidases including kexin proteases as well as the cluster-specific S41 family peptidase phomP1' and the peptidase phomG' to produce 5 identical copies of the hexapeptide Tyr-Val-Ile-Pro-Ile-Asp and 3 identical copies of Tyr-Val-Ile-Pro-Phe-Asp, that are further modified into phomapsins A and P, respectively. The timing and order of proteolysis of the phomA' precursor and PTMs are still unknown. Two tyrosinase-like enzyme phomQ1' and PhomQ2, catalyze the chlorination and hydroxylation of Tyr, respectively. PhomYb', is proposed to be involved in the construction of the macrocyclic structure. The other four ustYa family proteins may be involved in PTMs that generate the unique structure of phomopsin A. PhomYa' is required for the hydroxylation of C-beta of Tyr. PhomYc', PhomYd', and PhomYe' are responsible for the biosynthesis of 2,3-dehydroisoleucine (dIle), 2,3-dehydroaspartic acid (dAsp), and 3,4-dehydroproline (dPro), respectively. While dIle formation by phomYc is indispensable for the installation of dAsp by phomYd, the order of the other PTMs have not been elucidated yet. Most of the biosynthetic enzymes likely have broad substrate specificity, and thus, there might be a metabolic grid from a precursor to phomopsin A. The enzyme(s) responsible for the biosynthesis of 3,4-dehydrovaline (dVal) have also not been identified yet. Finally, PhomM' acts as an S-adenosylmethionine-dependent alpha-N-methyltransferase that catalyzes two successive N-methylation reactions, converting N-desmethyl-phomopsin A to phomopsin A and phomopsin A further to an N,N-dimethylated congener called phomopsin E.

It functions in the pathway mycotoxin biosynthesis. Ribosomally synthesized cyclic peptide phomopsin precursor; part of the gene cluster that mediates the biosynthesis of the phomopsins, a group of hexapeptide mycotoxins which infects lupins and causes lupinosis disease in livestock. The phomA' translated product contains a 5-fold repeated peptide embedding the hexapeptide Tyr-Val-Ile-Pro-Ile-Asp and a 3-fold repeated peptide embedding the hexapeptide Tyr-Val-Ile-Pro-Phe-Asp, that is converted into phomapsin A and phomapsin P, respectively. After being excised from the precursor peptide by kexin proteases, the core peptides are cyclized and modified post-translationally by enzymes encoded within the corresponding gene cluster. This is Ribosomally synthesized cyclic peptide phomopsin precursor phomA' from Diaporthe leptostromiformis (Lupinosis disease fungus).